A 167-amino-acid polypeptide reads, in one-letter code: Alpha-crystallin A chain (167 aa).

At Met1 the chain carries N-acetylmethionine. Residues 47 to 158 (YYRQSFFRGF…GERPIPVSRE (112 aa)) form the sHSP domain. Residues His94, Glu96, His101, and His148 each coordinate Zn(2+). Residues 143 to 167 (SLDSSHGERPIPVSREEKPTSAPSS) are disordered. The span at 147 to 161 (SHGERPIPVSREEKP) shows a compositional bias: basic and acidic residues. Residue Ser156 is glycosylated (O-linked (GlcNAc) serine).

Belongs to the small heat shock protein (HSP20) family. Heteropolymer composed of three CRYAA and one CRYAB subunits. Inter-subunit bridging via zinc ions enhances stability, which is crucial as there is no protein turn over in the lens. Can also form homodimers and homotetramers (dimers of dimers) which serve as the building blocks of homooligomers. Within homooligomers, the zinc-binding motif is created from residues of 3 different molecules. His-94 and Glu-96 from one molecule are ligands of the zinc ion, and His-101 and His-148 residues from additional molecules complete the site with tetrahedral coordination geometry.

It is found in the cytoplasm. The protein resides in the nucleus. Contributes to the transparency and refractive index of the lens. May act as a chaperone, preventing aggregation of various proteins under a wide range of stress conditions. The chain is Alpha-crystallin A chain (CRYAA) from Pelophylax lessonae (Pool frog).